Reading from the N-terminus, the 451-residue chain is F-box/kelch-repeat protein At1g74510 (451 aa).

An F-box domain is found at 93-139 (SSPVTRLDQNALLNCLAHCSLSDFGSIASTNRTFRSLIKDSELYRLR). Kelch repeat units follow at residues 137–188 (RLRR…KESL), 193–236 (ELLV…SLGE), 237–284 (IAVI…FMDG), 286–333 (FYCI…DQAK), and 349–395 (AVVK…GMAF).

The polypeptide is F-box/kelch-repeat protein At1g74510 (Arabidopsis thaliana (Mouse-ear cress)).